Reading from the N-terminus, the 949-residue chain is Probable transcriptional regulatory protein STB4 (949 aa).

A DNA-binding region (zn(2)-C6 fungal-type) is located at residues 87–113; the sequence is CELCKKRKVKCDGNNPCLNCSKHQKEC. Low complexity-rich tracts occupy residues 164-178 and 200-212; these read DGVS…NPNS and SGSN…NNNS. 2 disordered regions span residues 164–214 and 862–888; these read DGVS…NSFP and GERE…ATRS. A compositionally biased stretch (basic and acidic residues) spans 862–874; sequence GEREENADERQEN.

Its subcellular location is the nucleus. In terms of biological role, binds to SIN3. This Saccharomyces cerevisiae (strain ATCC 204508 / S288c) (Baker's yeast) protein is Probable transcriptional regulatory protein STB4 (STB4).